A 150-amino-acid polypeptide reads, in one-letter code: UPF0735 ACT domain-containing protein Helmi_18680 (150 aa).

An ACT domain is found at Ser-72–Ser-147.

This sequence belongs to the UPF0735 family.

This is UPF0735 ACT domain-containing protein Helmi_18680 from Heliobacterium modesticaldum (strain ATCC 51547 / Ice1).